Consider the following 340-residue polypeptide: uncharacterized protein (340 aa).

A helical membrane pass occupies residues 6–26 (ITFGLLVLMVCVILFVLYVQL).

The protein resides in the cell membrane. This is an uncharacterized protein from Bacillus subtilis (strain 168).